We begin with the raw amino-acid sequence, 114 residues long: Putative antiporter subunit mnhC2 (114 aa).

Transmembrane regions (helical) follow at residues 3–23 (LILLLVIGFLVFIGTYMILSI), 28–48 (IVIGISIYTHAGNLIIMSMGT), and 72–92 (AIVLTAIVIGFGMTAFLLVLV).

This sequence belongs to the CPA3 antiporters (TC 2.A.63) subunit C family. In terms of assembly, may form a heterooligomeric complex that consists of seven subunits: mnhA2, mnhB2, mnhC2, mnhD2, mnhE2, mnhF2 and mnhG2.

It localises to the cell membrane. In Staphylococcus aureus (strain Mu3 / ATCC 700698), this protein is Putative antiporter subunit mnhC2 (mnhC2).